The chain runs to 635 residues: Threonine--tRNA ligase (635 aa).

In terms of domain architecture, TGS spans 1–61 (MTVVRLPDGT…ETDSDLVLIT (61 aa)). The tract at residues 242–533 (DHRKLGKQLD…LIEHHAGALP (292 aa)) is catalytic. Zn(2+)-binding residues include Cys333, His384, and His510.

This sequence belongs to the class-II aminoacyl-tRNA synthetase family. As to quaternary structure, homodimer. The cofactor is Zn(2+).

Its subcellular location is the cytoplasm. The enzyme catalyses tRNA(Thr) + L-threonine + ATP = L-threonyl-tRNA(Thr) + AMP + diphosphate + H(+). Functionally, catalyzes the attachment of threonine to tRNA(Thr) in a two-step reaction: L-threonine is first activated by ATP to form Thr-AMP and then transferred to the acceptor end of tRNA(Thr). Also edits incorrectly charged L-seryl-tRNA(Thr). This Nitrosomonas europaea (strain ATCC 19718 / CIP 103999 / KCTC 2705 / NBRC 14298) protein is Threonine--tRNA ligase.